The chain runs to 236 residues: Lectin CPL (236 aa).

Mn(2+) is bound by residues E8 and D10. D10, Y12, N14, and D19 together coordinate Ca(2+). Residue N14 participates in a carbohydrate binding. Residues D19 and H24 each coordinate Mn(2+). A carbohydrate is bound by residues 99–100 (VY), D207, and R227.

The protein belongs to the leguminous lectin family. As to quaternary structure, homotetramer; dimer of dimers. Concanavalin A-like lectins of the Diocleinae subtribe undergo proteolytic processing referred to as circular permutation. The propeptide is split into an N-terminal and a C-terminal part, the gamma and beta chain, respectively. These are then religated in beta-gamma order to form the mature alpha chain. The beta and gamma chains can often be detected in cell extracts. Residues 1-118 of the mature chain, as displayed here, probably constitute the beta chain in the propeptide, residues 119-236 the gamma chain.

In terms of biological role, D-mannose/D-glucose-binding lectin that also binds derivative alpha-methyl-D-mannppyranoside. Has hemagglutinating activity towards rabbit erythrocytes. This Bionia pedicellata (Camptosema pedicellatum) protein is Lectin CPL.